The chain runs to 598 residues: Elongation factor 4 (598 aa).

The tr-type G domain maps to 2–184 (QHIRNFSIIA…TVVRRVPPPK (183 aa)). Residues 14–19 (DHGKST) and 131–134 (NKID) contribute to the GTP site.

The protein belongs to the TRAFAC class translation factor GTPase superfamily. Classic translation factor GTPase family. LepA subfamily.

The protein localises to the cell inner membrane. It carries out the reaction GTP + H2O = GDP + phosphate + H(+). Required for accurate and efficient protein synthesis under certain stress conditions. May act as a fidelity factor of the translation reaction, by catalyzing a one-codon backward translocation of tRNAs on improperly translocated ribosomes. Back-translocation proceeds from a post-translocation (POST) complex to a pre-translocation (PRE) complex, thus giving elongation factor G a second chance to translocate the tRNAs correctly. Binds to ribosomes in a GTP-dependent manner. The chain is Elongation factor 4 from Aromatoleum aromaticum (strain DSM 19018 / LMG 30748 / EbN1) (Azoarcus sp. (strain EbN1)).